The chain runs to 1108 residues: Eukaryotic translation initiation factor 2-alpha kinase 3 (1108 aa).

Positions Met-1 to Ala-27 are cleaved as a signal peptide. The Lumenal portion of the chain corresponds to Val-28–Asp-506. Residues Glu-71–Glu-92 form a disordered region. A glycan (N-linked (GlcNAc...) asparagine) is linked at Asn-253. The chain crosses the membrane as a helical span at residues Pro-507 to Ala-527. Residues Thr-528 to Asn-1108 lie on the Cytoplasmic side of the membrane. Positions Arg-542 to Asp-563 are disordered. Residues Phe-585–Phe-1069 form the Protein kinase domain. Met-591–Val-599 serves as a coordination point for ATP. A Phosphotyrosine; by autocatalysis modification is found at Tyr-611. Residue Lys-614 participates in ATP binding. The interval Glu-639 to Met-880 is insert loop. Phosphoserine is present on Ser-707. Disordered stretches follow at residues Asp-772–Arg-818 and Phe-832–Ser-856. Positions Ser-785–Ile-798 are enriched in polar residues. A Phosphothreonine modification is found at Thr-794. Over residues Ser-837–Ser-856 the composition is skewed to low complexity. The active-site Proton acceptor is Asp-929. Thr-974 carries the post-translational modification Phosphothreonine. A disordered region spans residues Leu-1080 to Asn-1108. Residue Ser-1086 is modified to Phosphoserine. The segment covering Gln-1097–Asn-1108 has biased composition (polar residues).

This sequence belongs to the protein kinase superfamily. Ser/Thr protein kinase family. GCN2 subfamily. As to quaternary structure, forms dimers with HSPA5/BIP in resting cells. Homotetramerizes in response to endoplasmic reticulum (ER) stress, leading to its activation. Interacts with HSP90B1/GRP94. Interacts with DNAJC3; inhibiting EIF2AK3/PERK activity. Interacts with ATAD3A; ATAD3A and EIF2S1/eIF-2-alpha occupy a common binding site within the cytoplasmic loop of EIF2AK3/PERK, leading to prevent EIF2AK3/PERK association with its substrate EIF2S1/eIF-2-alpha. Interacts with MFN2. Interacts with TMEM33. Interacts with PDIA6. Interacts with LACC1. In terms of processing, oligomerization of the N-terminal ER luminal domain by ER stress promotes EIF2AK3/PERK trans-autophosphorylation of the C-terminal cytoplasmic kinase domain at multiple residues including Thr-974 on the kinase activation loop. Autophosphorylated at Tyr-611 following endoplasmic reticulum stress, leading to activate its activity. Dephosphorylated at Tyr-611 by PTPN1/PTP1B, leading to inactivate its enzyme activity. Phosphorylation at Thr-794 by AKT (AKT1, AKT2 and/or AKT3) inactivates EIF2AK3/PERK. Post-translationally, ADP-ribosylated by PARP16 upon ER stress, which increases kinase activity. In terms of tissue distribution, ubiquitous.

The protein resides in the endoplasmic reticulum membrane. It carries out the reaction L-seryl-[protein] + ATP = O-phospho-L-seryl-[protein] + ADP + H(+). It catalyses the reaction L-threonyl-[protein] + ATP = O-phospho-L-threonyl-[protein] + ADP + H(+). The enzyme catalyses L-tyrosyl-[protein] + ATP = O-phospho-L-tyrosyl-[protein] + ADP + H(+). With respect to regulation, inhibited by HSPA5/BIP in absence of stress. Perturbation in protein folding in the endoplasmic reticulum (ER) promotes reversible dissociation from HSPA5/BIP and oligomerization, resulting in trans-autophosphorylation and kinase activity induction. Inactivated following phosphorylation at Thr-794 by AKT (AKT1, AKT2 and/or AKT3). Inhibited by ATAD3A at mitochondria-endoplasmic reticulum contact sites, providing a safe haven for mitochondrial protein translation during ER stress. Its function is as follows. Metabolic-stress sensing protein kinase that phosphorylates the alpha subunit of eukaryotic translation initiation factor 2 (EIF2S1/eIF-2-alpha) in response to various stress, such as unfolded protein response (UPR). Key effector of the integrated stress response (ISR) to unfolded proteins: EIF2AK3/PERK specifically recognizes and binds misfolded proteins, leading to its activation and EIF2S1/eIF-2-alpha phosphorylation. EIF2S1/eIF-2-alpha phosphorylation in response to stress converts EIF2S1/eIF-2-alpha in a global protein synthesis inhibitor, leading to a global attenuation of cap-dependent translation, while concomitantly initiating the preferential translation of ISR-specific mRNAs, such as the transcriptional activators ATF4 and QRICH1, and hence allowing ATF4- and QRICH1-mediated reprogramming. The EIF2AK3/PERK-mediated unfolded protein response increases mitochondrial oxidative phosphorylation by promoting ATF4-mediated expression of COX7A2L/SCAF1, thereby increasing formation of respiratory chain supercomplexes. In contrast to most subcellular compartments, mitochondria are protected from the EIF2AK3/PERK-mediated unfolded protein response due to EIF2AK3/PERK inhibition by ATAD3A at mitochondria-endoplasmic reticulum contact sites. In addition to EIF2S1/eIF-2-alpha, also phosphorylates NFE2L2/NRF2 in response to stress, promoting release of NFE2L2/NRF2 from the BCR(KEAP1) complex, leading to nuclear accumulation and activation of NFE2L2/NRF2. Serves as a critical effector of unfolded protein response (UPR)-induced G1 growth arrest due to the loss of cyclin-D1 (CCND1). Involved in control of mitochondrial morphology and function. This is Eukaryotic translation initiation factor 2-alpha kinase 3 (Eif2ak3) from Rattus norvegicus (Rat).